A 127-amino-acid polypeptide reads, in one-letter code: ATP synthase epsilon chain (127 aa).

It belongs to the ATPase epsilon chain family. As to quaternary structure, F-type ATPases have 2 components, CF(1) - the catalytic core - and CF(0) - the membrane proton channel. CF(1) has five subunits: alpha(3), beta(3), gamma(1), delta(1), epsilon(1). CF(0) has three main subunits: a, b and c.

It is found in the cell inner membrane. Functionally, produces ATP from ADP in the presence of a proton gradient across the membrane. The chain is ATP synthase epsilon chain from Leptospira borgpetersenii serovar Hardjo-bovis (strain JB197).